A 719-amino-acid polypeptide reads, in one-letter code: Pesticidal crystal protein Cry1Ia (719 aa).

It belongs to the delta endotoxin family.

In terms of biological role, promotes colloidosmotic lysis by binding to the midgut epithelial cells of certain coleopteran and lepidopteran species. Active on Plutella xylostella and Bombyx mori. In Bacillus thuringiensis subsp. kurstaki, this protein is Pesticidal crystal protein Cry1Ia (cry1Ia).